A 219-amino-acid polypeptide reads, in one-letter code: Triosephosphate isomerase (219 aa).

6-8 (NYK) is a substrate binding site. The Electrophile role is filled by His-90. Glu-138 (proton acceptor) is an active-site residue. Substrate is bound by residues Ile-143, Gly-178, and 199 to 200 (AS).

Belongs to the triosephosphate isomerase family. As to quaternary structure, homotetramer; dimer of dimers.

It localises to the cytoplasm. It catalyses the reaction D-glyceraldehyde 3-phosphate = dihydroxyacetone phosphate. It functions in the pathway carbohydrate biosynthesis; gluconeogenesis. The protein operates within carbohydrate degradation; glycolysis; D-glyceraldehyde 3-phosphate from glycerone phosphate: step 1/1. Its function is as follows. Involved in the gluconeogenesis. Catalyzes stereospecifically the conversion of dihydroxyacetone phosphate (DHAP) to D-glyceraldehyde-3-phosphate (G3P). This chain is Triosephosphate isomerase, found in Methanocaldococcus jannaschii (strain ATCC 43067 / DSM 2661 / JAL-1 / JCM 10045 / NBRC 100440) (Methanococcus jannaschii).